Consider the following 547-residue polypeptide: Probable ATP-dependent RNA helicase DDX56 (547 aa).

Residues 7 to 35 (LGFEHMGLDPRLLQAVTDLGWSRPTLIQE) carry the Q motif motif. Positions 38–218 (IPLALEGKDL…ELILHNPVTL (181 aa)) constitute a Helicase ATP-binding domain. Residue 51-58 (ARTGSGKT) participates in ATP binding. Ser-126 carries the phosphoserine modification. Position 141 is a phosphothreonine (Thr-141). A DEAD box motif is present at residues 166-169 (DEAD). Residues 230–424 (QLQQFQVVCE…PYQFRMEEIE (195 aa)) form the Helicase C-terminal domain. 2 stretches are compositionally biased toward basic residues: residues 506-525 (RPHKKRKKLSSSCRKAKRAK) and 532-547 (SFKHKGKKFRPTAKPS). The disordered stretch occupies residues 506–547 (RPHKKRKKLSSSCRKAKRAKSQNPLRSFKHKGKKFRPTAKPS). Residue Ser-532 is modified to Phosphoserine.

The protein belongs to the DEAD box helicase family. DDX56/DBP9 subfamily. As to quaternary structure, may form homooligomeric complexes. Interacts with IRF3. Interacts with OCT4 and POU5F1. In terms of assembly, (Microbial infection) Interacts with West Nile virus capsid protein C. (Microbial infection) Interacts with foot-and-mouth disease virus protein 3A; this interaction leads to inhibition of type I interferon production. As to quaternary structure, (Microbial infection) Interacts with EMCV protein 3C; this interaction leads to inhibition of type I interferon production. In terms of tissue distribution, detected in heart, brain, liver, pancreas, placenta and lung.

Its subcellular location is the nucleus. It localises to the nucleolus. It carries out the reaction ATP + H2O = ADP + phosphate + H(+). Nucleolar RNA helicase that plays a role in various biological processes including innate immunity, ribosome biogenesis or nucleolus organization. Plays an essential role in maintaining nucleolar integrity in planarian stem cells. Maintains embryonic stem cells proliferation by conventional regulation of ribosome assembly and interaction with OCT4 and POU5F1 complex. Regulates antiviral innate immunity by inhibiting the virus-triggered signaling nuclear translocation of IRF3. Mechanistically, acts by disrupting the interaction between IRF3 and importin IPO5. May play a role in later stages of the processing of the pre-ribosomal particles leading to mature 60S ribosomal subunits. Has intrinsic ATPase activity. Functionally, (Microbial infection) Helicase activity is important for packaging viral RNA into virions during West Nile virus infection. Its function is as follows. (Microbial infection) Plays a positive role in foot-and-mouth disease virus replication by inhibiting the phosphorylation of IRF3 leading to inhibition of type I interferon. In terms of biological role, (Microbial infection) Plays a positive role in EMCV replication by interrupting IRF3 phosphorylation and its nucleus translocation. In Homo sapiens (Human), this protein is Probable ATP-dependent RNA helicase DDX56 (DDX56).